A 178-amino-acid polypeptide reads, in one-letter code: Adenine phosphoribosyltransferase (178 aa).

It belongs to the purine/pyrimidine phosphoribosyltransferase family. Homodimer.

The protein resides in the cytoplasm. It catalyses the reaction AMP + diphosphate = 5-phospho-alpha-D-ribose 1-diphosphate + adenine. Its pathway is purine metabolism; AMP biosynthesis via salvage pathway; AMP from adenine: step 1/1. Functionally, catalyzes a salvage reaction resulting in the formation of AMP, that is energically less costly than de novo synthesis. This Bacteroides fragilis (strain YCH46) protein is Adenine phosphoribosyltransferase.